Reading from the N-terminus, the 88-residue chain is Beta-insect excitatory toxin LqhIT1a (88 aa).

Positions 1-18 (MKFFLLFLVVLPIMGVLG) are cleaved as a signal peptide. One can recognise an LCN-type CS-alpha/beta domain in the interval 20–83 (KNGYAVDSKG…ISGTTKKYCD (64 aa)). Disulfide bonds link Cys-34–Cys-55, Cys-40–Cys-60, Cys-44–Cys-62, and Cys-56–Cys-82.

This sequence belongs to the long (4 C-C) scorpion toxin superfamily. Sodium channel inhibitor family. Beta subfamily. In terms of tissue distribution, expressed by the venom gland.

The protein resides in the secreted. In terms of biological role, excitatory insect toxins induce a spastic paralysis. They bind voltage-independently at site-4 of sodium channels (Nav) and shift the voltage of activation toward more negative potentials thereby affecting sodium channel activation and promoting spontaneous and repetitive firing. This is Beta-insect excitatory toxin LqhIT1a from Leiurus hebraeus (Hebrew deathstalker scorpion).